We begin with the raw amino-acid sequence, 612 residues long: Elongation factor 4 (612 aa).

In terms of domain architecture, tr-type G spans 12-194; sequence SRIRNFSIIA…QIVEKVPAPA (183 aa). GTP contacts are provided by residues 24–29 and 141–144; these read DHGKST and NKID.

This sequence belongs to the TRAFAC class translation factor GTPase superfamily. Classic translation factor GTPase family. LepA subfamily.

It localises to the cell membrane. It catalyses the reaction GTP + H2O = GDP + phosphate + H(+). In terms of biological role, required for accurate and efficient protein synthesis under certain stress conditions. May act as a fidelity factor of the translation reaction, by catalyzing a one-codon backward translocation of tRNAs on improperly translocated ribosomes. Back-translocation proceeds from a post-translocation (POST) complex to a pre-translocation (PRE) complex, thus giving elongation factor G a second chance to translocate the tRNAs correctly. Binds to ribosomes in a GTP-dependent manner. In Bacillus pumilus (strain SAFR-032), this protein is Elongation factor 4.